The following is a 247-amino-acid chain: uncharacterized protein (247 aa).

4–28 (ALVTGGSRGIGRATALLLAQEGYTV) is a binding site for NADP(+). Ser142 lines the substrate pocket. The active-site Proton acceptor is Tyr156.

Belongs to the short-chain dehydrogenases/reductases (SDR) family.

This is an uncharacterized protein from Escherichia coli (strain K12).